We begin with the raw amino-acid sequence, 539 residues long: GMP synthase [glutamine-hydrolyzing] (539 aa).

Positions 4–202 constitute a Glutamine amidotransferase type-1 domain; it reads KILILDFGSQ…VLDIAGAKPD (199 aa). Cys-81 (nucleophile) is an active-site residue. Residues His-176 and Glu-178 contribute to the active site. The 193-residue stretch at 203–395 folds into the GMPS ATP-PPase domain; that stretch reads WIMRDHIEEA…LGLPAEMVYR (193 aa). 230-236 contacts ATP; that stretch reads SGGVDSS.

In terms of assembly, homodimer.

It carries out the reaction XMP + L-glutamine + ATP + H2O = GMP + L-glutamate + AMP + diphosphate + 2 H(+). It participates in purine metabolism; GMP biosynthesis; GMP from XMP (L-Gln route): step 1/1. Catalyzes the synthesis of GMP from XMP. This chain is GMP synthase [glutamine-hydrolyzing], found in Burkholderia pseudomallei (strain 1106a).